The following is a 486-amino-acid chain: Endoglucanase 16 (486 aa).

Residues 1–30 (MANYKGRGNVMIRSMLLGLYGIINIVCVNG) form the signal peptide. A glycan (N-linked (GlcNAc...) asparagine) is linked at asparagine 29. The active-site Nucleophile is aspartate 87. Residues histidine 407, aspartate 458, and glutamate 467 contribute to the active site.

This sequence belongs to the glycosyl hydrolase 9 (cellulase E) family.

The protein resides in the secreted. It carries out the reaction Endohydrolysis of (1-&gt;4)-beta-D-glucosidic linkages in cellulose, lichenin and cereal beta-D-glucans.. The sequence is that of Endoglucanase 16 from Arabidopsis thaliana (Mouse-ear cress).